A 244-amino-acid chain; its full sequence is uncharacterized protein (244 aa).

An N-terminal signal peptide occupies residues 1–19; it reads MRGIFFLILILNFIGLIFS. N-linked (GlcNAc...) asparagine glycans are attached at residues Asn45 and Asn77. ShKT domains lie at 67-105 and 113-149; these read CNNP…CGKC and CSDK…CNRC. Cystine bridges form between Cys113–Cys149, Cys122–Cys142, and Cys129–Cys146. N-linked (GlcNAc...) asparagine glycans are attached at residues Asn152 and Asn158. ShKT domains lie at 171-205 and 208-243; these read CTDL…CNAC and CEDA…CNIC. Disulfide bonds link Cys171-Cys205, Cys178-Cys198, Cys185-Cys202, Cys208-Cys243, Cys215-Cys236, and Cys224-Cys240.

This is an uncharacterized protein from Caenorhabditis elegans.